A 41-amino-acid chain; its full sequence is Photosystem I reaction center subunit IX (41 aa).

Residues 7–29 form a helical membrane-spanning segment; sequence YLSTAPVLLTVWLSITASGIMII.

This sequence belongs to the PsaJ family.

It is found in the plastid. It localises to the chloroplast thylakoid membrane. In terms of biological role, may help in the organization of the PsaE and PsaF subunits. The protein is Photosystem I reaction center subunit IX of Heterosigma akashiwo (strain NIES-293 / 8280G21-1).